Reading from the N-terminus, the 233-residue chain is 2-C-methyl-D-erythritol 4-phosphate cytidylyltransferase (233 aa).

Belongs to the IspD/TarI cytidylyltransferase family. IspD subfamily.

It catalyses the reaction 2-C-methyl-D-erythritol 4-phosphate + CTP + H(+) = 4-CDP-2-C-methyl-D-erythritol + diphosphate. It participates in isoprenoid biosynthesis; isopentenyl diphosphate biosynthesis via DXP pathway; isopentenyl diphosphate from 1-deoxy-D-xylulose 5-phosphate: step 2/6. Catalyzes the formation of 4-diphosphocytidyl-2-C-methyl-D-erythritol from CTP and 2-C-methyl-D-erythritol 4-phosphate (MEP). This is 2-C-methyl-D-erythritol 4-phosphate cytidylyltransferase from Syntrophotalea carbinolica (strain DSM 2380 / NBRC 103641 / GraBd1) (Pelobacter carbinolicus).